The following is a 182-amino-acid chain: MVELQELYKKTITPALQKEFGFKSVMAVPRLEKITLNMGLGEAVADKKVIERAMDDMIKISGQKPLITYARKSEAGFKIRAGWPIGCKVTLRRDRMYEFLKRLISIAIPRIRDFRGLSPKSFDGRGNYSLGIREQIVFPEIQYDKVDAIRGMDITITTTARTDEEGRALLKAFGFPLKDESR.

Belongs to the universal ribosomal protein uL5 family. Part of the 50S ribosomal subunit; part of the 5S rRNA/L5/L18/L25 subcomplex. Contacts the 5S rRNA and the P site tRNA. Forms a bridge to the 30S subunit in the 70S ribosome.

This is one of the proteins that bind and probably mediate the attachment of the 5S RNA into the large ribosomal subunit, where it forms part of the central protuberance. In the 70S ribosome it contacts protein S13 of the 30S subunit (bridge B1b), connecting the 2 subunits; this bridge is implicated in subunit movement. Contacts the P site tRNA; the 5S rRNA and some of its associated proteins might help stabilize positioning of ribosome-bound tRNAs. This is Large ribosomal subunit protein uL5 from Coxiella burnetii (strain CbuG_Q212) (Coxiella burnetii (strain Q212)).